The primary structure comprises 877 residues: Alanine--tRNA ligase (877 aa).

Zn(2+) contacts are provided by H564, H568, C666, and H670.

This sequence belongs to the class-II aminoacyl-tRNA synthetase family. Requires Zn(2+) as cofactor.

The protein resides in the cytoplasm. The enzyme catalyses tRNA(Ala) + L-alanine + ATP = L-alanyl-tRNA(Ala) + AMP + diphosphate. Functionally, catalyzes the attachment of alanine to tRNA(Ala) in a two-step reaction: alanine is first activated by ATP to form Ala-AMP and then transferred to the acceptor end of tRNA(Ala). Also edits incorrectly charged Ser-tRNA(Ala) and Gly-tRNA(Ala) via its editing domain. In Pelotomaculum thermopropionicum (strain DSM 13744 / JCM 10971 / SI), this protein is Alanine--tRNA ligase.